Reading from the N-terminus, the 630-residue chain is Chaperone protein HtpG (630 aa).

An a; substrate-binding region spans residues 1–343 (MAKHQFQTEA…SKDLPLNVSR (343 aa)). Positions 344 to 554 (EILQSNAVMA…KEDPAFMMAQ (211 aa)) are b. A c region spans residues 555–630 (IMKQMGQSGD…RLNRVIAKAI (76 aa)).

This sequence belongs to the heat shock protein 90 family. Homodimer.

It localises to the cytoplasm. In terms of biological role, molecular chaperone. Has ATPase activity. The chain is Chaperone protein HtpG from Sulfurimonas denitrificans (strain ATCC 33889 / DSM 1251) (Thiomicrospira denitrificans (strain ATCC 33889 / DSM 1251)).